Here is a 439-residue protein sequence, read N- to C-terminus: MSNYFDKIEKVKYEGADSTNPFAFKHYNPNEVILGKTMAEHLRLAVCYWHTFCWTGNDMFGVGSLDRSWQKTGDLLEGAKQKAEIAFEFFQKLGIPYYCFHDVDIAPEGNSYKEYVHNFHTMVDILEKKQAETGVKLLWGTANCFTNPRYMSGASTNPNPEVFSWAASQVFNAMNATKRLGGENYVLWGGREGYETLLNTDLKREREQIGRFMQMVVEHKHKIGFNGTLLIEPKPQEPTKHQYDYDVATVYGFLKQFGLEKEIKVNIEANHATLAGHTFQHEIATAAALDIFGSIDANRGDPQLGWDTDQFPNSVEENTLVMYEILKAGGFTTGGFNFDAKIRRQSTDPYDLFHGHIGAIDVLALSLKRAAKMIEDKTLQGIVDQRYAGWNGDLGQQILAGKASLEDLAKIVESKALDPKPVSGQQEYLENLVNNYIYR.

Active-site residues include His101 and Asp104. Positions 232, 268, 271, 296, 307, 309, and 339 each coordinate Mg(2+).

Belongs to the xylose isomerase family. In terms of assembly, homotetramer. Requires Mg(2+) as cofactor.

The protein localises to the cytoplasm. It carries out the reaction alpha-D-xylose = alpha-D-xylulofuranose. The chain is Xylose isomerase from Actinobacillus pleuropneumoniae serotype 5b (strain L20).